The sequence spans 310 residues: tRNA uridine(34) hydroxylase (310 aa).

In terms of domain architecture, Rhodanese spans 134 to 232 (DDPDTLLIDT…YFEEVSQTES (99 aa)). Cys192 acts as the Cysteine persulfide intermediate in catalysis.

This sequence belongs to the TrhO family.

The catalysed reaction is uridine(34) in tRNA + AH2 + O2 = 5-hydroxyuridine(34) in tRNA + A + H2O. Functionally, catalyzes oxygen-dependent 5-hydroxyuridine (ho5U) modification at position 34 in tRNAs. In Prochlorococcus marinus (strain MIT 9313), this protein is tRNA uridine(34) hydroxylase.